Here is a 123-residue protein sequence, read N- to C-terminus: Ribonuclease P protein component (123 aa).

Belongs to the RnpA family. Consists of a catalytic RNA component (M1 or rnpB) and a protein subunit.

It catalyses the reaction Endonucleolytic cleavage of RNA, removing 5'-extranucleotides from tRNA precursor.. Functionally, RNaseP catalyzes the removal of the 5'-leader sequence from pre-tRNA to produce the mature 5'-terminus. It can also cleave other RNA substrates such as 4.5S RNA. The protein component plays an auxiliary but essential role in vivo by binding to the 5'-leader sequence and broadening the substrate specificity of the ribozyme. In Herpetosiphon aurantiacus (strain ATCC 23779 / DSM 785 / 114-95), this protein is Ribonuclease P protein component.